The following is a 190-amino-acid chain: MEHESKNKVDGMEMEKGKKESGSRKGLELTMRVLALVLTMVAATVLGVAKQTKVVPIKLIPTLPPLNVSTTAKASYLSAFVYNISANAIACGYTAISIVIVMISKGKRSKSLLMAVLIGDLMMVALLFSSTGAAGAIGLMGRHGNKHVMWKKVCGVFGKFCNQAAVSVAITLIASVVFMLLVVLDALKLP.

Positions Met-1–Ser-23 are disordered. Residues Met-1–Glu-28 lie on the Cytoplasmic side of the membrane. Residues Leu-29–Ala-49 form a helical membrane-spanning segment. Topologically, residues Lys-50 to Asn-83 are extracellular. A glycan (N-linked (GlcNAc...) asparagine) is linked at Asn-67. A helical membrane pass occupies residues Ile-84–Ser-104. Residues Lys-105 to Ser-111 are Cytoplasmic-facing. The helical transmembrane segment at Leu-112–Gly-132 threads the bilayer. Residues Ala-133–Gln-163 lie on the Extracellular side of the membrane. The chain crosses the membrane as a helical span at residues Ala-164–Leu-184. At Asp-185–Pro-190 the chain is on the cytoplasmic side.

The protein belongs to the Casparian strip membrane proteins (CASP) family. Homodimer and heterodimers.

The protein resides in the cell membrane. The protein is CASP-like protein 1E1 of Arabidopsis thaliana (Mouse-ear cress).